Here is a 594-residue protein sequence, read N- to C-terminus: APOBEC1 complementation factor (594 aa).

3 RRM domains span residues 56–134, 136–218, and 231–303; these read CEIF…ASVD, CRLF…WAEP, and KILY…LAKP. A required for nuclear localization region spans residues 360-409; the sequence is HFPATKGHLSNRAIIRAPSVREIYMNVPVGAAGVRGLGGRGYLAYTGLGR. Position 499 is a phosphothreonine (Thr499).

In terms of assembly, part of the apolipoprotein B mRNA editing complex with APOBEC1. Interacts with TNPO2; TNPO2 may be responsible for transport of A1CF into the nucleus. Interacts with SYNCRIP. Interacts with CELF2/CUGBP2. Interacts with RBM47. Widely expressed with highest levels in brain, liver, pancreas, colon and spleen.

It localises to the nucleus. The protein resides in the endoplasmic reticulum. The protein localises to the cytoplasm. Functionally, essential component of the apolipoprotein B mRNA editing enzyme complex which is responsible for the postranscriptional editing of a CAA codon for Gln to a UAA codon for stop in APOB mRNA. Binds to APOB mRNA and is probably responsible for docking the catalytic subunit, APOBEC1, to the mRNA to allow it to deaminate its target cytosine. The complex also protects the edited APOB mRNA from nonsense-mediated decay. The sequence is that of APOBEC1 complementation factor (A1CF) from Homo sapiens (Human).